The following is a 231-amino-acid chain: Elongation factor 1-delta (231 aa).

The interval 75–136 (SGVTVEGNAP…AAAAAAKPAK (62 aa)) is disordered. Residues 101–117 (ADDDDDDDVDLFGEETE) show a composition bias toward acidic residues. Over residues 118-127 (EEKKAAEERA) the composition is skewed to basic and acidic residues.

This sequence belongs to the EF-1-beta/EF-1-delta family. In terms of assembly, EF-1 is composed of 4 subunits: alpha, beta (1B-alpha=beta'), delta (1B-beta), and gamma (1B-gamma).

Its function is as follows. EF-1-beta and EF-1-beta' stimulate the exchange of GDP bound to EF-1-alpha to GTP. This chain is Elongation factor 1-delta, found in Beta vulgaris (Sugar beet).